A 425-amino-acid chain; its full sequence is Kynureninase (425 aa).

Residues Leu105, Thr106, Phe133–Asp136, Asp218, His221, and Tyr243 each bind pyridoxal 5'-phosphate. Lys244 bears the N6-(pyridoxal phosphate)lysine mark. Residues Trp274 and Asn302 each coordinate pyridoxal 5'-phosphate.

The protein belongs to the kynureninase family. As to quaternary structure, homodimer. It depends on pyridoxal 5'-phosphate as a cofactor.

The enzyme catalyses L-kynurenine + H2O = anthranilate + L-alanine + H(+). It catalyses the reaction 3-hydroxy-L-kynurenine + H2O = 3-hydroxyanthranilate + L-alanine + H(+). It functions in the pathway amino-acid degradation; L-kynurenine degradation; L-alanine and anthranilate from L-kynurenine: step 1/1. It participates in cofactor biosynthesis; NAD(+) biosynthesis; quinolinate from L-kynurenine: step 2/3. Catalyzes the cleavage of L-kynurenine (L-Kyn) and L-3-hydroxykynurenine (L-3OHKyn) into anthranilic acid (AA) and 3-hydroxyanthranilic acid (3-OHAA), respectively. The chain is Kynureninase from Christiangramia forsetii (strain DSM 17595 / CGMCC 1.15422 / KT0803) (Gramella forsetii).